We begin with the raw amino-acid sequence, 154 residues long: Egg-lysin (154 aa).

The signal sequence occupies residues 1 to 18 (MKLLVLWVFAMMATVAMS).

Monomer. Homodimer. Molecules associate into dimers and then rapidly dissociate again. Interacts (as a monomer) with the egg vitelline layer protein VERL (via VERL repeats); each VERL chain can bind multiple copies of lysin. In terms of tissue distribution, sperm.

The protein localises to the cytoplasmic vesicle. It is found in the secretory vesicle. Its subcellular location is the acrosome lumen. In terms of biological role, creates a 3 um hole in the egg vitelline layer through which the sperm passes. Does not have enzyme activity. Species-specific interaction between the sperm protein lysin and the egg protein VERL exposes a basic surface on lysin that may dissociate the egg vitelline layer via electrostatic repulsion. Plays a role in ensuring species-specific fertilization. The sequence is that of Egg-lysin from Haliotis fulgens (Green abalone).